Reading from the N-terminus, the 237-residue chain is Alpha-S1-casein (237 aa).

The first 15 residues, 1-15 (MKLLIFSCLVTLALA), serve as a signal peptide directing secretion. Positions 39–60 (EDPIPVSEASSSEESVHQLNRD) are disordered. Ser-79, Ser-80, and Ser-81 each carry phosphoserine.

This sequence belongs to the alpha-casein family. Mammary gland specific. Secreted in milk.

It is found in the secreted. Important role in the capacity of milk to transport calcium phosphate. In Notamacropus eugenii (Tammar wallaby), this protein is Alpha-S1-casein (CSN1S1).